Reading from the N-terminus, the 205-residue chain is N-(5'-phosphoribosyl)anthranilate isomerase (205 aa).

The protein belongs to the TrpF family.

It catalyses the reaction N-(5-phospho-beta-D-ribosyl)anthranilate = 1-(2-carboxyphenylamino)-1-deoxy-D-ribulose 5-phosphate. The protein operates within amino-acid biosynthesis; L-tryptophan biosynthesis; L-tryptophan from chorismate: step 3/5. The protein is N-(5'-phosphoribosyl)anthranilate isomerase of Thermotoga neapolitana (strain ATCC 49049 / DSM 4359 / NBRC 107923 / NS-E).